The sequence spans 660 residues: Bifunctional polymyxin resistance protein ArnA (660 aa).

The formyltransferase ArnAFT stretch occupies residues 1-304 (MKTVVFAYHD…TLGLVQGSRL (304 aa)). 86–88 (HLI) is a (6R)-10-formyltetrahydrofolate binding site. The Proton donor; for formyltransferase activity role is filled by H104. (6R)-10-formyltetrahydrofolate is bound by residues R114 and 136-140 (VKRAD). The tract at residues 314 to 660 (RRTRVLILGV…RTVDLTDKPS (347 aa)) is dehydrogenase ArnADH. Residues D347 and 368–369 (DI) each bind NAD(+). Residues A393, Y398, and 432 to 433 (TS) each bind UDP-alpha-D-glucuronate. The active-site Proton acceptor; for decarboxylase activity is the E434. Residues R460, N492, 526–535 (KLIDGGKQKR), and Y613 each bind UDP-alpha-D-glucuronate. R619 serves as the catalytic Proton donor; for decarboxylase activity.

The protein in the N-terminal section; belongs to the Fmt family. UDP-L-Ara4N formyltransferase subfamily. In the C-terminal section; belongs to the NAD(P)-dependent epimerase/dehydratase family. UDP-glucuronic acid decarboxylase subfamily. Homohexamer, formed by a dimer of trimers.

It carries out the reaction UDP-alpha-D-glucuronate + NAD(+) = UDP-beta-L-threo-pentopyranos-4-ulose + CO2 + NADH. The enzyme catalyses UDP-4-amino-4-deoxy-beta-L-arabinose + (6R)-10-formyltetrahydrofolate = UDP-4-deoxy-4-formamido-beta-L-arabinose + (6S)-5,6,7,8-tetrahydrofolate + H(+). It participates in nucleotide-sugar biosynthesis; UDP-4-deoxy-4-formamido-beta-L-arabinose biosynthesis; UDP-4-deoxy-4-formamido-beta-L-arabinose from UDP-alpha-D-glucuronate: step 1/3. The protein operates within nucleotide-sugar biosynthesis; UDP-4-deoxy-4-formamido-beta-L-arabinose biosynthesis; UDP-4-deoxy-4-formamido-beta-L-arabinose from UDP-alpha-D-glucuronate: step 3/3. Its pathway is bacterial outer membrane biogenesis; lipopolysaccharide biosynthesis. Its function is as follows. Bifunctional enzyme that catalyzes the oxidative decarboxylation of UDP-glucuronic acid (UDP-GlcUA) to UDP-4-keto-arabinose (UDP-Ara4O) and the addition of a formyl group to UDP-4-amino-4-deoxy-L-arabinose (UDP-L-Ara4N) to form UDP-L-4-formamido-arabinose (UDP-L-Ara4FN). The modified arabinose is attached to lipid A and is required for resistance to polymyxin and cationic antimicrobial peptides. This is Bifunctional polymyxin resistance protein ArnA from Escherichia coli (strain SE11).